The following is a 349-amino-acid chain: Probable dual-specificity RNA methyltransferase RlmN (349 aa).

Glu-94 serves as the catalytic Proton acceptor. One can recognise a Radical SAM core domain in the interval 100-324 (YKTHTSICLS…NKNNVNTTIR (225 aa)). An intrachain disulfide couples Cys-107 to Cys-335. Positions 114, 118, and 121 each coordinate [4Fe-4S] cluster. Residues 161 to 162 (GE), Ser-193, 216 to 218 (SLH), and Asn-292 contribute to the S-adenosyl-L-methionine site. The active-site S-methylcysteine intermediate is the Cys-335.

This sequence belongs to the radical SAM superfamily. RlmN family. [4Fe-4S] cluster serves as cofactor.

The protein localises to the cytoplasm. It catalyses the reaction adenosine(2503) in 23S rRNA + 2 reduced [2Fe-2S]-[ferredoxin] + 2 S-adenosyl-L-methionine = 2-methyladenosine(2503) in 23S rRNA + 5'-deoxyadenosine + L-methionine + 2 oxidized [2Fe-2S]-[ferredoxin] + S-adenosyl-L-homocysteine. The catalysed reaction is adenosine(37) in tRNA + 2 reduced [2Fe-2S]-[ferredoxin] + 2 S-adenosyl-L-methionine = 2-methyladenosine(37) in tRNA + 5'-deoxyadenosine + L-methionine + 2 oxidized [2Fe-2S]-[ferredoxin] + S-adenosyl-L-homocysteine. In terms of biological role, specifically methylates position 2 of adenine 2503 in 23S rRNA and position 2 of adenine 37 in tRNAs. This Finegoldia magna (strain ATCC 29328 / DSM 20472 / WAL 2508) (Peptostreptococcus magnus) protein is Probable dual-specificity RNA methyltransferase RlmN.